The sequence spans 745 residues: Exocyst complex component 3 (745 aa).

Lysine 28 carries the post-translational modification N6-acetyllysine.

Belongs to the SEC6 family. The exocyst complex is composed of EXOC1, EXOC2, EXOC3, EXOC4, EXOC5, EXOC6, EXOC7 and EXOC8. Interacts with EXOC3L1. Interacts with BIRC6/bruce. Interacts with MYRIP. Interacts with SLC6A9. In terms of tissue distribution, expressed in epididymis (at protein level).

It localises to the cytoplasm. The protein resides in the perinuclear region. Its subcellular location is the cell projection. It is found in the growth cone. The protein localises to the midbody. It localises to the golgi apparatus. The protein resides in the neuron projection. In terms of biological role, component of the exocyst complex involved in the docking of exocytic vesicles with fusion sites on the plasma membrane. The polypeptide is Exocyst complex component 3 (EXOC3) (Homo sapiens (Human)).